The following is a 30-amino-acid chain: 80 kDa carcinoembryonic antigen-binding protein (30 aa).

As to quaternary structure, binds to carcinoembryonic antigen (CEA). Post-translationally, the N-terminus is blocked.

The protein resides in the cell membrane. In terms of biological role, may play a role in the development of hepatic metastases from colorectal cancers. This is 80 kDa carcinoembryonic antigen-binding protein from Rattus norvegicus (Rat).